The sequence spans 504 residues: Glucose-6-phosphate isomerase (504 aa).

Glutamate 333 functions as the Proton donor in the catalytic mechanism. Residues histidine 364 and lysine 473 contribute to the active site.

It belongs to the GPI family.

Its subcellular location is the cytoplasm. The enzyme catalyses alpha-D-glucose 6-phosphate = beta-D-fructose 6-phosphate. It functions in the pathway carbohydrate biosynthesis; gluconeogenesis. It participates in carbohydrate degradation; glycolysis; D-glyceraldehyde 3-phosphate and glycerone phosphate from D-glucose: step 2/4. Functionally, catalyzes the reversible isomerization of glucose-6-phosphate to fructose-6-phosphate. The polypeptide is Glucose-6-phosphate isomerase (Xanthomonas axonopodis pv. citri (strain 306)).